Reading from the N-terminus, the 1855-residue chain is Unconventional myosin-Va (1855 aa).

An N-acetylalanine modification is found at alanine 2. Residues threonine 8 to proline 60 enclose the Myosin N-terminal SH3-like domain. A Myosin motor domain is found at valine 69–alanine 763. Residue glycine 163–threonine 170 participates in ATP binding. Positions alanine 598–histidine 631 are disordered. Serine 600 bears the Phosphoserine mark. Residues serine 600–threonine 613 are compositionally biased toward polar residues. Residues leucine 643–aspartate 665 form an actin-binding region. 6 IQ domains span residues leucine 766 to arginine 788, methionine 789 to alanine 818, arginine 814 to isoleucine 836, arginine 837 to leucine 861, arginine 862 to lysine 883, and serine 885 to serine 914. Coiled coils occupy residues serine 914–valine 1237 and valine 1338–valine 1445. A Phosphothreonine modification is found at threonine 1032. 2 positions are modified to phosphoserine: serine 1452 and serine 1652. The Dilute domain occupies threonine 1534 to aspartate 1810. Position 1760 is a phosphothreonine (threonine 1760).

It belongs to the TRAFAC class myosin-kinesin ATPase superfamily. Myosin family. In terms of assembly, may be a homodimer, which associates with multiple calmodulin or myosin light chains. Interacts with RIPL2, the interaction is required for its role in dendrite formation. Interacts with MLPH. Interacts with SYTL4. Interacts with MYRIP. Interacts with RAB10; mediates the transport to the plasma membrane of SLC2A4/GLUT4 storage vesicles. Interacts with FMR1; this interaction occurs in association with polyribosome. In terms of tissue distribution, detected in melanocytes.

The catalysed reaction is ATP + H2O = ADP + phosphate + H(+). Functionally, processive actin-based motor that can move in large steps approximating the 36-nm pseudo-repeat of the actin filament. Can hydrolyze ATP in the presence of actin, which is essential for its function as a motor protein. Involved in melanosome transport. Also mediates the transport of vesicles to the plasma membrane. May also be required for some polarization process involved in dendrite formation. The sequence is that of Unconventional myosin-Va (MYO5A) from Homo sapiens (Human).